The sequence spans 345 residues: Phosphoribosylformylglycinamidine cyclo-ligase (345 aa).

It belongs to the AIR synthase family.

It is found in the cytoplasm. It catalyses the reaction 2-formamido-N(1)-(5-O-phospho-beta-D-ribosyl)acetamidine + ATP = 5-amino-1-(5-phospho-beta-D-ribosyl)imidazole + ADP + phosphate + H(+). The protein operates within purine metabolism; IMP biosynthesis via de novo pathway; 5-amino-1-(5-phospho-D-ribosyl)imidazole from N(2)-formyl-N(1)-(5-phospho-D-ribosyl)glycinamide: step 2/2. The protein is Phosphoribosylformylglycinamidine cyclo-ligase of Myxococcus xanthus (strain DK1622).